Reading from the N-terminus, the 570-residue chain is Glutamate--tRNA ligase (570 aa).

Positions 105 to 115 match the 'HIGH' region motif; sequence PNPDGAFHLGN.

This sequence belongs to the class-I aminoacyl-tRNA synthetase family. Glutamate--tRNA ligase type 2 subfamily.

The protein resides in the cytoplasm. It carries out the reaction tRNA(Glu) + L-glutamate + ATP = L-glutamyl-tRNA(Glu) + AMP + diphosphate. Catalyzes the attachment of glutamate to tRNA(Glu) in a two-step reaction: glutamate is first activated by ATP to form Glu-AMP and then transferred to the acceptor end of tRNA(Glu). This is Glutamate--tRNA ligase from Pyrococcus horikoshii (strain ATCC 700860 / DSM 12428 / JCM 9974 / NBRC 100139 / OT-3).